The chain runs to 208 residues: Uridine kinase (208 aa).

11–18 (GGTGSGKS) provides a ligand contact to ATP.

The protein belongs to the uridine kinase family.

It localises to the cytoplasm. The enzyme catalyses uridine + ATP = UMP + ADP + H(+). It carries out the reaction cytidine + ATP = CMP + ADP + H(+). The protein operates within pyrimidine metabolism; CTP biosynthesis via salvage pathway; CTP from cytidine: step 1/3. It functions in the pathway pyrimidine metabolism; UMP biosynthesis via salvage pathway; UMP from uridine: step 1/1. The chain is Uridine kinase from Alkaliphilus metalliredigens (strain QYMF).